An 860-amino-acid chain; its full sequence is Leucine--tRNA ligase (860 aa).

The 'HIGH' region signature appears at 42 to 52 (PYPSGRLHMGH). Positions 619–623 (KMSKS) match the 'KMSKS' region motif. Lys622 serves as a coordination point for ATP.

This sequence belongs to the class-I aminoacyl-tRNA synthetase family.

The protein localises to the cytoplasm. It catalyses the reaction tRNA(Leu) + L-leucine + ATP = L-leucyl-tRNA(Leu) + AMP + diphosphate. This is Leucine--tRNA ligase from Escherichia coli (strain K12 / MC4100 / BW2952).